A 372-amino-acid polypeptide reads, in one-letter code: GDP-mannose 4,6 dehydratase (372 aa).

The tract at residues 1-22 (MAHAPASCPSSRNSGDGDKGKP) is disordered. Ala-2 is subject to N-acetylalanine. Residues 30-35 (GITGQD), 55-58 (RRSS), 86-87 (DL), 108-112 (LGAQS), and Tyr-123 contribute to the NADP(+) site. Thr-155 is a catalytic residue. Active-site nucleophile residues include Glu-157 and Tyr-179. The NADP(+) site is built by Lys-183, His-209, and Arg-214. The residue at position 323 (Tyr-323) is a Phosphotyrosine.

It belongs to the NAD(P)-dependent epimerase/dehydratase family. GDP-mannose 4,6-dehydratase subfamily. The cofactor is NADP(+).

The catalysed reaction is GDP-alpha-D-mannose = GDP-4-dehydro-alpha-D-rhamnose + H2O. It participates in nucleotide-sugar biosynthesis; GDP-L-fucose biosynthesis via de novo pathway; GDP-L-fucose from GDP-alpha-D-mannose: step 1/2. With respect to regulation, inhibited by GDP-fucose. Catalyzes the conversion of GDP-D-mannose to GDP-4-dehydro-6-deoxy-D-mannose. The sequence is that of GDP-mannose 4,6 dehydratase (GMDS) from Cricetulus griseus (Chinese hamster).